The primary structure comprises 609 residues: Phosphomethylpyrimidine synthase (609 aa).

Substrate contacts are provided by residues N219, M248, Y277, H313, 333 to 335, 374 to 377, and E413; these read SRG and DGLR. H417 provides a ligand contact to Zn(2+). Position 440 (Y440) interacts with substrate. Zn(2+) is bound at residue H481. Residues C561, C564, and C569 each contribute to the [4Fe-4S] cluster site.

The protein belongs to the ThiC family. Requires [4Fe-4S] cluster as cofactor.

It catalyses the reaction 5-amino-1-(5-phospho-beta-D-ribosyl)imidazole + S-adenosyl-L-methionine = 4-amino-2-methyl-5-(phosphooxymethyl)pyrimidine + CO + 5'-deoxyadenosine + formate + L-methionine + 3 H(+). The protein operates within cofactor biosynthesis; thiamine diphosphate biosynthesis. Its function is as follows. Catalyzes the synthesis of the hydroxymethylpyrimidine phosphate (HMP-P) moiety of thiamine from aminoimidazole ribotide (AIR) in a radical S-adenosyl-L-methionine (SAM)-dependent reaction. This chain is Phosphomethylpyrimidine synthase, found in Deinococcus geothermalis (strain DSM 11300 / CIP 105573 / AG-3a).